Reading from the N-terminus, the 315-residue chain is Ribosomal protein L11 methyltransferase (315 aa).

The S-adenosyl-L-methionine site is built by threonine 163, glycine 184, aspartate 206, and asparagine 248.

Belongs to the methyltransferase superfamily. PrmA family.

It is found in the cytoplasm. The catalysed reaction is L-lysyl-[protein] + 3 S-adenosyl-L-methionine = N(6),N(6),N(6)-trimethyl-L-lysyl-[protein] + 3 S-adenosyl-L-homocysteine + 3 H(+). Methylates ribosomal protein L11. In Lacticaseibacillus paracasei (strain ATCC 334 / BCRC 17002 / CCUG 31169 / CIP 107868 / KCTC 3260 / NRRL B-441) (Lactobacillus paracasei), this protein is Ribosomal protein L11 methyltransferase.